The sequence spans 228 residues: Prepilin leader peptidase/N-methyltransferase (228 aa).

Helical transmembrane passes span 18–38, 95–115, 116–136, 147–167, 168–188, and 204–224; these read LWGSFLFLSGLAFGSFFNVVI, RYPLMELATGALFVLAGYLMA, PGVPLLGGLILLSLLLILAAI, LTLPLMWAGLLFNLSATYVPL, AEAVVGAMAGYLSLWSVYWVF, and LLAALGAWLGWQALPQTLLLA.

Belongs to the peptidase A24 family.

It is found in the cell inner membrane. The catalysed reaction is Typically cleaves a -Gly-|-Phe- bond to release an N-terminal, basic peptide of 5-8 residues from type IV prepilin, and then N-methylates the new N-terminal amino group, the methyl donor being S-adenosyl-L-methionine.. Its function is as follows. Plays an essential role in type IV pili and type II pseudopili formation by proteolytically removing the leader sequence from substrate proteins and subsequently monomethylating the alpha-amino group of the newly exposed N-terminal phenylalanine. The chain is Prepilin leader peptidase/N-methyltransferase (pulO) from Klebsiella pneumoniae.